A 95-amino-acid polypeptide reads, in one-letter code: Pyrimidine/purine nucleoside phosphorylase (95 aa).

This sequence belongs to the nucleoside phosphorylase PpnP family.

It catalyses the reaction a purine D-ribonucleoside + phosphate = a purine nucleobase + alpha-D-ribose 1-phosphate. It carries out the reaction adenosine + phosphate = alpha-D-ribose 1-phosphate + adenine. The enzyme catalyses cytidine + phosphate = cytosine + alpha-D-ribose 1-phosphate. The catalysed reaction is guanosine + phosphate = alpha-D-ribose 1-phosphate + guanine. It catalyses the reaction inosine + phosphate = alpha-D-ribose 1-phosphate + hypoxanthine. It carries out the reaction thymidine + phosphate = 2-deoxy-alpha-D-ribose 1-phosphate + thymine. The enzyme catalyses uridine + phosphate = alpha-D-ribose 1-phosphate + uracil. The catalysed reaction is xanthosine + phosphate = alpha-D-ribose 1-phosphate + xanthine. In terms of biological role, catalyzes the phosphorolysis of diverse nucleosides, yielding D-ribose 1-phosphate and the respective free bases. Can use uridine, adenosine, guanosine, cytidine, thymidine, inosine and xanthosine as substrates. Also catalyzes the reverse reactions. The protein is Pyrimidine/purine nucleoside phosphorylase of Vibrio cholerae serotype O1 (strain ATCC 39315 / El Tor Inaba N16961).